The sequence spans 443 residues: ATP-dependent protease ATPase subunit HslU (443 aa).

Residues isoleucine 20, 62–67 (GVGKTE), aspartate 255, glutamate 321, and arginine 393 each bind ATP.

It belongs to the ClpX chaperone family. HslU subfamily. A double ring-shaped homohexamer of HslV is capped on each side by a ring-shaped HslU homohexamer. The assembly of the HslU/HslV complex is dependent on binding of ATP.

It is found in the cytoplasm. ATPase subunit of a proteasome-like degradation complex; this subunit has chaperone activity. The binding of ATP and its subsequent hydrolysis by HslU are essential for unfolding of protein substrates subsequently hydrolyzed by HslV. HslU recognizes the N-terminal part of its protein substrates and unfolds these before they are guided to HslV for hydrolysis. This is ATP-dependent protease ATPase subunit HslU from Helicobacter pylori (strain Shi470).